A 313-amino-acid polypeptide reads, in one-letter code: 3'-5' exoribonuclease YhaM (313 aa).

Positions serine 22–alanine 90 form a DNA-binding region, OB. One can recognise an HD domain in the interval histidine 163 to serine 279.

It belongs to the YhaM family.

Functionally, shows a 3'-5' exoribonuclease activity. The chain is 3'-5' exoribonuclease YhaM from Listeria innocua serovar 6a (strain ATCC BAA-680 / CLIP 11262).